The sequence spans 358 residues: Cyclin-dependent kinase 11 (358 aa).

The Protein kinase domain maps to phenylalanine 52–phenylalanine 336. ATP is bound by residues isoleucine 58–valine 66 and lysine 81. The active-site Proton acceptor is the aspartate 176.

Belongs to the protein kinase superfamily. CMGC Ser/Thr protein kinase family. CDC2/CDKX subfamily.

The enzyme catalyses L-seryl-[protein] + ATP = O-phospho-L-seryl-[protein] + ADP + H(+). The catalysed reaction is L-threonyl-[protein] + ATP = O-phospho-L-threonyl-[protein] + ADP + H(+). This Dictyostelium discoideum (Social amoeba) protein is Cyclin-dependent kinase 11 (cdk11).